Reading from the N-terminus, the 455-residue chain is tRNA modification GTPase MnmE (455 aa).

Arg-25, Glu-85, and Arg-124 together coordinate (6S)-5-formyl-5,6,7,8-tetrahydrofolate. The region spanning 221-375 (GLSTAIIGRP…IEERINKLFF (155 aa)) is the TrmE-type G domain. Position 231 (Asn-231) interacts with K(+). GTP is bound by residues 231-236 (NVGKSS), 250-256 (TDIEGTT), and 275-278 (DTAG). Ser-235 lines the Mg(2+) pocket. Residues Thr-250, Ile-252, and Thr-255 each contribute to the K(+) site. Thr-256 contributes to the Mg(2+) binding site. Lys-455 is a (6S)-5-formyl-5,6,7,8-tetrahydrofolate binding site.

The protein belongs to the TRAFAC class TrmE-Era-EngA-EngB-Septin-like GTPase superfamily. TrmE GTPase family. As to quaternary structure, homodimer. Heterotetramer of two MnmE and two MnmG subunits. K(+) serves as cofactor.

The protein resides in the cytoplasm. Functionally, exhibits a very high intrinsic GTPase hydrolysis rate. Involved in the addition of a carboxymethylaminomethyl (cmnm) group at the wobble position (U34) of certain tRNAs, forming tRNA-cmnm(5)s(2)U34. This chain is tRNA modification GTPase MnmE, found in Streptococcus mutans serotype c (strain ATCC 700610 / UA159).